A 561-amino-acid polypeptide reads, in one-letter code: Sesquiterpene synthase TPS2 (561 aa).

The segment at 6–26 is disordered; sequence ANGHSDVPSTQPPIGKQKKEI. Residues R277, D314, D318, R455, and D458 each coordinate (2E,6E)-farnesyl diphosphate. Mg(2+) contacts are provided by D314 and D318. The short motif at 314–318 is the DDXXD motif element; the sequence is DDTYD. Mg(2+) contacts are provided by D458, S462, and E466.

It belongs to the terpene synthase family. Tpsa subfamily. Monomer. Mg(2+) is required as a cofactor.

Its subcellular location is the cytoplasm. It carries out the reaction (2E,6E)-farnesyl diphosphate = beta-ylangene + diphosphate. The enzyme catalyses (2E,6E)-farnesyl diphosphate = beta-copaene + diphosphate. The catalysed reaction is (2E,6E)-farnesyl diphosphate = beta-cubebene + diphosphate. Its pathway is secondary metabolite biosynthesis; terpenoid biosynthesis. Its function is as follows. Sesquiterpene synthase involved in the biosynthesis of volatile organic compounds. Mediates the conversion of (2E,6E)-farnesyl diphosphate (FPP) into beta-ylangene, beta-copaene and beta-cubebene. Does not use (2E)-geranyl diphosphate (GPP) as substrate. This Cananga odorata (Ylang-ylang tree) protein is Sesquiterpene synthase TPS2.